Here is a 161-residue protein sequence, read N- to C-terminus: Regulatory protein RecX (161 aa).

Belongs to the RecX family.

The protein localises to the cytoplasm. In terms of biological role, modulates RecA activity. The polypeptide is Regulatory protein RecX (Thermotoga petrophila (strain ATCC BAA-488 / DSM 13995 / JCM 10881 / RKU-1)).